The chain runs to 230 residues: Large ribosomal subunit protein uL1 (230 aa).

The protein belongs to the universal ribosomal protein uL1 family. As to quaternary structure, part of the 50S ribosomal subunit.

Its function is as follows. Binds directly to 23S rRNA. The L1 stalk is quite mobile in the ribosome, and is involved in E site tRNA release. Protein L1 is also a translational repressor protein, it controls the translation of the L11 operon by binding to its mRNA. This is Large ribosomal subunit protein uL1 from Erythrobacter litoralis (strain HTCC2594).